Consider the following 176-residue polypeptide: Probable inosine/xanthosine triphosphatase (176 aa).

Mg(2+) is bound at residue D36.

The protein belongs to the YjjX NTPase family. As to quaternary structure, homodimer. Mg(2+) serves as cofactor. Requires Mn(2+) as cofactor.

It carries out the reaction XTP + H2O = XDP + phosphate + H(+). It catalyses the reaction ITP + H2O = IDP + phosphate + H(+). In terms of biological role, phosphatase that hydrolyzes non-canonical purine nucleotides such as XTP and ITP to their respective diphosphate derivatives. Probably excludes non-canonical purines from DNA/RNA precursor pool, thus preventing their incorporation into DNA/RNA and avoiding chromosomal lesions. The protein is Probable inosine/xanthosine triphosphatase of Saccharolobus solfataricus (strain ATCC 35092 / DSM 1617 / JCM 11322 / P2) (Sulfolobus solfataricus).